An 83-amino-acid polypeptide reads, in one-letter code: MKASVFAVILGLVVLCACSFAEDEQDQFVSPNELLKSMFVESRHEFTPEVEGRYCQKWMWTCDSKRACCEGLRCKLWCRKIIG.

The first 21 residues, 1–21 (MKASVFAVILGLVVLCACSFA), serve as a signal peptide directing secretion. Residues 22-53 (EDEQDQFVSPNELLKSMFVESRHEFTPEVEGR) constitute a propeptide that is removed on maturation. 3 disulfide bridges follow: C55/C69, C62/C74, and C68/C78. I82 bears the Isoleucine amide mark.

The protein belongs to the neurotoxin 30 (phrixotoxin) family. In terms of tissue distribution, expressed by the venom gland.

Its subcellular location is the secreted. This gating-modifier toxin shows an important inhibitory activity on sodium channels. It is very active on Nav1.7/SCN9A (IC(50)~0.6 nM), and also shows activity on Nav1.3/SCN3A (IC(50)=292 nM), Nav1.4/SCN4A (IC(50)=2.2-159 nM), and Nav1.5/SCN5A (IC(50)=2.3-2.9 uM). It has also been shown to inhibit tetrodotoxin (TTX)-resistant (IC(50)=27.6 nM) and TTX-sensitive (IC(50)=30.2 nM) sodium channels in rat dorsal root ganglion neurons. Lower inhibitory activity has also been shown on potassium channels: Kv4.2/KCND2 (IC(50)=604.2 nM), Kv4.3/KCND3 (IC(50)=425.1 nM), and Kv2.1/KCNB1 (IC(50)=14.3 uM). It binds to phospholipid membranes. Like its analog AM-8145, it may act by interacting only with the second voltage-sensor domain of Nav1.7/SCN9A. The sequence is that of Beta/kappa-theraphotoxin-Cg2a from Chilobrachys guangxiensis (Chinese earth tiger tarantula).